Consider the following 574-residue polypeptide: Cytochrome P450 306a1 (574 aa).

The segment covering 303–314 (EKEQLRQSKEAD) has biased composition (basic and acidic residues). Positions 303–333 (EKEQLRQSKEADPSQEQSEADEDDEESDEED) are disordered. A compositionally biased stretch (acidic residues) spans 320-333 (SEADEDDEESDEED). Position 505 (C505) interacts with heme.

It belongs to the cytochrome P450 family. The cofactor is heme. As to expression, first seen at the early (syncytial) blastoderm stage 4. During cellularization of the blastoderm (stage 5), stripes of expression appear and remain through to stage 10. Expression becomes undetectable during germ band retraction (stages 11-14). By stage 15, some expression resumes in the primordium of the ring gland, so that by stage 17 strong expression is seen, but only in the ring gland. This specific localization continues throughout the larval instars (at protein level). Expressed in the prothoracic gland cells of the larval ring gland (RG). Levels decline just after the molt to the third instar then increase later during the wandering stage. Low levels of expression are seen in the larval brain and fat body. In the adult, majority of expression is restricted to the ovaries, with low levels in the head and carcass of both sexes.

It localises to the endoplasmic reticulum membrane. The protein resides in the microsome membrane. It carries out the reaction 2,22,25-trideoxyecdysone + 2 reduced [adrenodoxin] + O2 + 2 H(+) = 2,22-dideoxyecdysone + 2 oxidized [adrenodoxin] + H2O. It functions in the pathway steroid biosynthesis; ecdysteroid biosynthesis. Functionally, involved in the metabolism of insect hormones; responsible for ecdysteroid C25-hydroxylase activity. May be involved in the breakdown of synthetic insecticides. The protein is Cytochrome P450 306a1 of Drosophila melanogaster (Fruit fly).